We begin with the raw amino-acid sequence, 267 residues long: Urease accessory protein UreD (267 aa).

Belongs to the UreD family. As to quaternary structure, ureD, UreF and UreG form a complex that acts as a GTP-hydrolysis-dependent molecular chaperone, activating the urease apoprotein by helping to assemble the nickel containing metallocenter of UreC. The UreE protein probably delivers the nickel.

The protein localises to the cytoplasm. In terms of biological role, required for maturation of urease via the functional incorporation of the urease nickel metallocenter. In Synechococcus sp. (strain JA-2-3B'a(2-13)) (Cyanobacteria bacterium Yellowstone B-Prime), this protein is Urease accessory protein UreD.